The chain runs to 426 residues: Ubiquitin carboxyl-terminal hydrolase 46 (426 aa).

A lipid anchor (N-myristoyl glycine) is attached at G2. The region spanning 27 to 406 is the USP domain; the sequence is YGLVNFGNTC…SAYILFYQAR (380 aa). C36 acts as the Nucleophile in catalysis. The disordered stretch occupies residues 162-181; sequence TAGLPRSDEKGTSERNGGIT. The active-site Proton acceptor is H342.

The protein belongs to the peptidase C19 family. Interacts with wdr-20 and wdr-48; the catalytic activity of usp-46 is increased in the presence of both wdr-20 and wdr-48. Interacts with glr-1; the interaction results in deubiquitination of glr-1. Expressed in a number of tissues including the nervous system, pharynx, body wall muscle, vulva muscle and intestine and is detected in many head and ventral cord neurons.

It is found in the perikaryon. It localises to the cytoplasm. The catalysed reaction is Thiol-dependent hydrolysis of ester, thioester, amide, peptide and isopeptide bonds formed by the C-terminal Gly of ubiquitin (a 76-residue protein attached to proteins as an intracellular targeting signal).. Its function is as follows. Regulates the abundance of the glr-1 glutamate receptor in the ventral nerve cord by promoting its deubiquitination and preventing its degradation in the lysosome. Contributes to the regulation of embryonic polarity. This is Ubiquitin carboxyl-terminal hydrolase 46 (usp-46) from Caenorhabditis elegans.